The chain runs to 474 residues: Glutamine synthetase (474 aa).

In terms of domain architecture, GS beta-grasp spans 14–99 (EKIELIDLKF…VCSIKEPRTG (86 aa)). Residues 106–474 (PRVIAQKAID…PYEFSIYYDV (369 aa)) enclose the GS catalytic domain. Residues Glu-131 and Glu-133 each contribute to the Mg(2+) site. Glu-211 serves as a coordination point for ATP. Mg(2+) contacts are provided by Glu-216 and Glu-224. Residues 268-269 (NG) and Gly-269 contribute to the L-glutamate site. His-273 is a Mg(2+) binding site. ATP contacts are provided by residues 275–277 (HQS) and Ser-277. L-glutamate contacts are provided by Arg-325, Glu-331, and Arg-343. ATP is bound by residues Arg-343, Arg-348, and Lys-357. Glu-362 contributes to the Mg(2+) binding site. An L-glutamate-binding site is contributed by Arg-364. Tyr-402 is subject to O-AMP-tyrosine.

The protein belongs to the glutamine synthetase family. Oligomer of 12 subunits arranged in the form of two hexagons. The cofactor is Mg(2+).

The protein resides in the cytoplasm. The enzyme catalyses L-glutamate + NH4(+) + ATP = L-glutamine + ADP + phosphate + H(+). With respect to regulation, the activity of this enzyme could be controlled by adenylation under conditions of abundant glutamine. In terms of biological role, involved in nitrogen metabolism via ammonium assimilation. Catalyzes the ATP-dependent biosynthesis of glutamine from glutamate and ammonia. The sequence is that of Glutamine synthetase from Nostoc sp. (strain PCC 7120 / SAG 25.82 / UTEX 2576).